Reading from the N-terminus, the 99-residue chain is PE-PGRS family protein PE25 (99 aa).

Residues 1–92 (MSFVITNPEA…GADKYATAEA (92 aa)) form the PE domain. Ser-2 carries the post-translational modification N-acetylserine.

Belongs to the mycobacterial PE family. Forms a heterodimer with PPE41. The dimer forms a 1:1:1 heterotrimeric complex with EspG5. Interacts with PPE51.

The protein localises to the secreted. Functionally, the PE25/PPE41 dimer induces both a strong humoral and cellular immune response. PE25 protein alone induces low response. The dimer induces necrosis, but not apoptosis, in mouse macrophage cells. It also induces activation and maturation of mouse dendritic cells and drives Th2-biased immune responses. This Mycobacterium tuberculosis (strain ATCC 25618 / H37Rv) protein is PE-PGRS family protein PE25.